The primary structure comprises 535 residues: Suppressor of cytokine signaling 6 (535 aa).

A compositionally biased stretch (basic residues) spans 80 to 89 (RLSAKQKSKG). The disordered stretch occupies residues 80–105 (RLSAKQKSKGKAGTPSGSSADEDTFS). An SH2 domain is found at 384–491 (WYWGPITRWE…TYPVRLTNPV (108 aa)). The region spanning 486 to 535 (RLTNPVSRFMQVRSLQYLCRFVIRQYTRIDLIQKLPLPNKMKDYLQEKHY) is the SOCS box domain.

Interacts with RBCK1. Interacts with phosphorylated IRS4. Interacts with PIM3. Interacts with KIT (phosphorylated).

It functions in the pathway protein modification; protein ubiquitination. Its function is as follows. SOCS family proteins form part of a classical negative feedback system that regulates cytokine signal transduction. May be a substrate recognition component of a SCF-like ECS (Elongin BC-CUL2/5-SOCS-box protein) E3 ubiquitin-protein ligase complex which mediates the ubiquitination and subsequent proteasomal degradation of target proteins. Regulates KIT degradation by ubiquitination of the tyrosine-phosphorylated receptor. The protein is Suppressor of cytokine signaling 6 (SOCS6) of Homo sapiens (Human).